Consider the following 329-residue polypeptide: Ribosomal RNA small subunit methyltransferase C (329 aa).

The protein belongs to the methyltransferase superfamily. RsmC family. In terms of assembly, monomer.

It is found in the cytoplasm. The catalysed reaction is guanosine(1207) in 16S rRNA + S-adenosyl-L-methionine = N(2)-methylguanosine(1207) in 16S rRNA + S-adenosyl-L-homocysteine + H(+). Its function is as follows. Specifically methylates the guanine in position 1207 of 16S rRNA in the 30S particle. This chain is Ribosomal RNA small subunit methyltransferase C, found in Actinobacillus pleuropneumoniae serotype 7 (strain AP76).